The primary structure comprises 334 residues: Spermidine synthase 1 (334 aa).

Over residues 1 to 16 (MDAKETSATDLKRPRE) the composition is skewed to basic and acidic residues. The disordered stretch occupies residues 1-35 (MDAKETSATDLKRPREEDDNGGAATMETENGDQKK). A PABS domain is found at 45-282 (PGWFSEMSPM…GVIGFMLCST (238 aa)). Gln-76 contributes to the S-adenosyl 3-(methylsulfanyl)propylamine binding site. Residue Tyr-106 participates in putrescine binding. S-adenosyl 3-(methylsulfanyl)propylamine is bound by residues Gln-107, Asp-131, Glu-151, 182–183 (DG), and Asp-201. The active-site Proton acceptor is Asp-201. Putrescine contacts are provided by residues 201-204 (DSSD) and Tyr-270.

The protein belongs to the spermidine/spermine synthase family. As to quaternary structure, homotetramer and heterodimer. Component of a multiprotein complex. Interacts with SPMS and SPDSYN2.

It catalyses the reaction S-adenosyl 3-(methylsulfanyl)propylamine + putrescine = S-methyl-5'-thioadenosine + spermidine + H(+). It functions in the pathway amine and polyamine biosynthesis; spermidine biosynthesis; spermidine from putrescine: step 1/1. This is Spermidine synthase 1 (SPDSYN1) from Arabidopsis thaliana (Mouse-ear cress).